The chain runs to 117 residues: Ig heavy chain V region MOO (117 aa).

Positions glutamate 1–serine 116 constitute an Ig-like domain.

The polypeptide is Ig heavy chain V region MOO (Canis lupus familiaris (Dog)).